A 153-amino-acid chain; its full sequence is Ribonuclease H (153 aa).

The 142-residue stretch at 7-148 (PADLVEMWTD…ADMLANQGVA (142 aa)) folds into the RNase H type-1 domain. Asp-16, Glu-54, Asp-76, and Asp-140 together coordinate Mg(2+).

Belongs to the RNase H family. Monomer. Mg(2+) is required as a cofactor.

The protein localises to the cytoplasm. It catalyses the reaction Endonucleolytic cleavage to 5'-phosphomonoester.. In terms of biological role, endonuclease that specifically degrades the RNA of RNA-DNA hybrids. This chain is Ribonuclease H, found in Bordetella avium (strain 197N).